The chain runs to 542 residues: Protein GDAP2 homolog (542 aa).

The Macro domain occupies 58–237 (RSPFPLSKDV…TYEVLAPLYF (180 aa)). Residues 277-304 (PQHSVHMRHGHTDDDSDVSPHDMEGNSS) form a disordered region. Residues 286 to 300 (GHTDDDSDVSPHDME) are compositionally biased toward basic and acidic residues. In terms of domain architecture, CRAL-TRIO spans 373–530 (QVEDLTEVSG…YITEYDMATN (158 aa)).

Belongs to the GDAP2 family.

This Drosophila pseudoobscura pseudoobscura (Fruit fly) protein is Protein GDAP2 homolog.